The following is a 396-amino-acid chain: Beta-peptidyl aminopeptidase BapA (396 aa).

The first 21 residues, 1 to 21 (MHYLKFPAIIAGMLLAGAASA), serve as a signal peptide directing secretion. Catalysis depends on Ser-271, which acts as the Nucleophile. Catalysis depends on proton donor/acceptor residues Ser-309 and Asp-311.

The protein belongs to the peptidase S58 family. In terms of assembly, heterooctamer of 4 heterodimers ((alpha:beta)4); each heterodimer is composed of an alpha subunit and a beta subunit processed from the same precursor. Autoproteolytic processing to generate the alpha and beta subunit is required for self-activation and is proposed to use a similar mechanism as substrate cleavage.

The protein resides in the periplasm. The catalysed reaction is Cleaves N-terminal beta-homoamino acids from peptides composed of 2 to 6 amino acids.. Its activity is regulated as follows. Inhibited by AEBSF (4-(2-aminoethyl)benzenesulfonyl fluoride, Pefabloc SC). Functionally, beta-aminopeptidase that can cleave synthetic beta-peptides which consist of backbone-elongated beta-amino acid residues that are not processed by common proteolytic enzymes. Can cleave the beta-peptides beta-homoVal-beta-homoAla-beta-homoLeu and beta-homoAla-beta-homoLeu. Requires a beta-amino acid at the N-terminus of peptide substrates and cleaves the peptide bond between the N-terminal beta-amino acid and the amino acid at the second position of tripeptidic substrates of the general structure H-betahXaa-Ile-betahTyr-OH according to the following preferences with regard to the side chain of the N-terminal beta-amino acid: aliphatic and aromatic &gt; OH-containing &gt; hydrogen, basic and polar. beta-homoVal-beta-homoAla-beta-homoLeu and beta-homoAla-beta-homoLeu. This chain is Beta-peptidyl aminopeptidase BapA, found in Sphingosinicella microcystinivorans.